The chain runs to 302 residues: Proline dehydrogenase 1 (302 aa).

Position 95 (lysine 95) interacts with substrate. The active site involves aspartate 129. FAD contacts are provided by methionine 130 and glutamine 158. Arginine 179 is an active-site residue. Residues 182-184 (KGA) and 221-222 (TH) each bind FAD. 283–284 (RR) lines the substrate pocket.

It belongs to the proline dehydrogenase family. Requires FAD as cofactor.

It catalyses the reaction L-proline + a quinone = (S)-1-pyrroline-5-carboxylate + a quinol + H(+). Its pathway is amino-acid degradation; L-proline degradation into L-glutamate; L-glutamate from L-proline: step 1/2. In terms of biological role, converts proline to delta-1-pyrroline-5-carboxylate. The sequence is that of Proline dehydrogenase 1 (fadM) from Bacillus subtilis (strain 168).